The sequence spans 121 residues: Small ribosomal subunit protein eS24 (121 aa).

Belongs to the eukaryotic ribosomal protein eS24 family.

In Pyrobaculum arsenaticum (strain DSM 13514 / JCM 11321 / PZ6), this protein is Small ribosomal subunit protein eS24.